A 769-amino-acid chain; its full sequence is Integrin beta-2 (769 aa).

An N-terminal signal peptide occupies residues Met-1–Ser-22. At Gln-23 the chain carries Pyrrolidone carboxylic acid. Residues Gln-23–Asn-700 lie on the Extracellular side of the membrane. One can recognise a PSI domain in the interval Glu-24–Pro-74. Disulfide bonds link Cys-25–Cys-43, Cys-33–Cys-447, Cys-36–Cys-62, Cys-46–Cys-73, Cys-191–Cys-198, Cys-246–Cys-286, Cys-386–Cys-400, Cys-420–Cys-445, Cys-449–Cys-467, Cys-459–Cys-470, Cys-472–Cys-481, Cys-483–Cys-514, Cys-497–Cys-512, Cys-506–Cys-517, Cys-519–Cys-534, Cys-536–Cys-559, Cys-541–Cys-557, Cys-549–Cys-562, Cys-564–Cys-573, Cys-575–Cys-598, Cys-582–Cys-596, Cys-590–Cys-601, Cys-603–Cys-612, Cys-615–Cys-618, Cys-622–Cys-662, Cys-628–Cys-647, Cys-631–Cys-643, and Cys-670–Cys-695. Residues Asn-50 and Asn-116 are each glycosylated (N-linked (GlcNAc...) asparagine). Residues Gly-124–Leu-363 form the VWFA domain. Residues Ser-136 and Ser-138 each coordinate Mg(2+). Ser-138, Asp-141, Asp-142, and Asp-173 together coordinate Ca(2+). Ca(2+)-binding residues include Asn-229, Asp-231, Pro-233, and Glu-234. Glu-234 provides a ligand contact to Mg(2+). Asn-254 carries an N-linked (GlcNAc...) asparagine glycan. Ca(2+)-binding residues include Asp-264 and Glu-347. The Cell attachment site signature appears at Arg-397–Asp-399. I-EGF domains lie at Cys-449–Glu-482, Cys-483–Glu-535, Cys-536–Gln-574, and Cys-575–Ser-613. N-linked (GlcNAc...) asparagine glycosylation is present at Asn-501. The N-linked (GlcNAc...) asparagine glycan is linked to Asn-642. The chain crosses the membrane as a helical span at residues Ile-701–Trp-723. At Lys-724–Ser-769 the chain is on the cytoplasmic side. A phosphoserine mark is found at Ser-745 and Ser-756. A phosphothreonine mark is found at Thr-758 and Thr-760.

Belongs to the integrin beta chain family. In terms of assembly, heterodimer of an alpha and a beta subunit. The ITGB2 beta subunit associates with the ITGAL, ITGAM, ITGAX or ITGAD alpha subunits. Found in a complex with CD177 and ITGAM/CD11b. Interacts with FGR. Interacts with COPS5 and RANBP9. Interacts with FLNA (via filamin repeats 4, 9, 12, 17, 19, 21, and 23). Interacts with THBD. In terms of processing, both Ser-745 and Ser-756 become phosphorylated when T-cells are exposed to phorbol esters. Phosphorylation on Thr-758 (but not on Ser-756) allows interaction with 14-3-3 proteins.

The protein resides in the cell membrane. The protein localises to the membrane raft. Its function is as follows. Integrin ITGAL/ITGB2 is a receptor for ICAM1, ICAM2, ICAM3 and ICAM4. Integrin ITGAL/ITGB2 is also a receptor for the secreted form of ubiquitin-like protein ISG15; the interaction is mediated by ITGAL. Integrins ITGAM/ITGB2 and ITGAX/ITGB2 are receptors for the iC3b fragment of the third complement component and for fibrinogen. Integrin ITGAX/ITGB2 recognizes the sequence G-P-R in fibrinogen alpha-chain. Integrin ITGAM/ITGB2 recognizes P1 and P2 peptides of fibrinogen gamma chain. Integrin ITGAM/ITGB2 is also a receptor for factor X. Integrin ITGAD/ITGB2 is a receptor for ICAM3 and VCAM1. Contributes to natural killer cell cytotoxicity. Involved in leukocyte adhesion and transmigration of leukocytes including T-cells and neutrophils. Triggers neutrophil transmigration during lung injury through PTK2B/PYK2-mediated activation. Integrin ITGAL/ITGB2 in association with ICAM3, contributes to apoptotic neutrophil phagocytosis by macrophages. This Bos taurus (Bovine) protein is Integrin beta-2 (ITGB2).